The primary structure comprises 736 residues: DNA topoisomerase 1 (736 aa).

Residues 2–113 (KHLIIVESPA…SYPRIVFHEI (112 aa)) enclose the Toprim domain. Mg(2+) contacts are provided by glutamate 8 and aspartate 82. A Topo IA-type catalytic domain is found at 129-552 (DMFKVNAQQA…DFYYPFMDKI (424 aa)). The interval 163 to 168 (SAGRVQ) is interaction with DNA. Tyrosine 297 (O-(5'-phospho-DNA)-tyrosine intermediate) is an active-site residue. C4-type zinc fingers lie at residues 572–598 (CPKC…YPKC), 616–642 (CEKC…YPEC), 663–689 (CPEC…YPKC), and 702–725 (CEKC…CIQC).

Belongs to the type IA topoisomerase family. As to quaternary structure, monomer. Mg(2+) is required as a cofactor.

It carries out the reaction ATP-independent breakage of single-stranded DNA, followed by passage and rejoining.. In terms of biological role, releases the supercoiling and torsional tension of DNA, which is introduced during the DNA replication and transcription, by transiently cleaving and rejoining one strand of the DNA duplex. Introduces a single-strand break via transesterification at a target site in duplex DNA. The scissile phosphodiester is attacked by the catalytic tyrosine of the enzyme, resulting in the formation of a DNA-(5'-phosphotyrosyl)-enzyme intermediate and the expulsion of a 3'-OH DNA strand. The free DNA strand then undergoes passage around the unbroken strand, thus removing DNA supercoils. Finally, in the religation step, the DNA 3'-OH attacks the covalent intermediate to expel the active-site tyrosine and restore the DNA phosphodiester backbone. This is DNA topoisomerase 1 from Helicobacter pylori (strain J99 / ATCC 700824) (Campylobacter pylori J99).